A 633-amino-acid chain; its full sequence is Phosphomethylpyrimidine synthase (633 aa).

The span at 1–13 (MNIRSNPDTTLPA) shows a compositional bias: polar residues. The tract at residues 1 to 22 (MNIRSNPDTTLPAVTTGPLPSS) is disordered. Substrate is bound by residues Asn-221, Met-250, Tyr-279, His-315, 335–337 (SRG), 376–379 (DGLR), and Glu-415. Residue His-419 coordinates Zn(2+). Residue Tyr-442 participates in substrate binding. His-483 is a Zn(2+) binding site. Residues Cys-563, Cys-566, and Cys-571 each contribute to the [4Fe-4S] cluster site.

It belongs to the ThiC family. Homodimer. [4Fe-4S] cluster is required as a cofactor.

It catalyses the reaction 5-amino-1-(5-phospho-beta-D-ribosyl)imidazole + S-adenosyl-L-methionine = 4-amino-2-methyl-5-(phosphooxymethyl)pyrimidine + CO + 5'-deoxyadenosine + formate + L-methionine + 3 H(+). It participates in cofactor biosynthesis; thiamine diphosphate biosynthesis. Its function is as follows. Catalyzes the synthesis of the hydroxymethylpyrimidine phosphate (HMP-P) moiety of thiamine from aminoimidazole ribotide (AIR) in a radical S-adenosyl-L-methionine (SAM)-dependent reaction. In Bradyrhizobium sp. (strain BTAi1 / ATCC BAA-1182), this protein is Phosphomethylpyrimidine synthase.